Here is a 256-residue protein sequence, read N- to C-terminus: Chitinase 11 (256 aa).

An N-terminal signal peptide occupies residues 1–22 (MRRLLPLAGATLLIAAAGGASG). Intrachain disulfides connect C48/C109 and C214/C247. Residue E91 is the Proton donor of the active site.

It belongs to the glycosyl hydrolase 19 family. Chitinase class II subfamily. In terms of tissue distribution, expressed in leaves and at lower levels in roots, sheaths and meristems.

It carries out the reaction Random endo-hydrolysis of N-acetyl-beta-D-glucosaminide (1-&gt;4)-beta-linkages in chitin and chitodextrins.. In Oryza sativa subsp. japonica (Rice), this protein is Chitinase 11 (Cht11).